The chain runs to 99 residues: MSQDFVTLVSKDDKEYEISRSAAMISPTLKAMIEGPFRESKGRIELKQFDSHILEKAVEYLNYNLKYSGVSEDDDEIPEFEIPTEMSLELLLAADYLSI.

Position 2 is an N-acetylserine (Ser-2). A Phosphoserine modification is found at Ser-2.

The protein belongs to the SKP1 family. Heterodimer with ELA1. Component of a CRL3 E3 ubiquitin ligase complex consisting of the cullin CUL3, the linker protein ELC1, the substrate receptor ELA1, and the RING protein HRT1. Interacts with CIN5. Interacts with PCL6. Interacts with SNF4. Interacts with the large RNA polymerase II subunit RPO21 in a manner dependent on DEF1. Interacts with DEF1. Interacts with RAD7. Interacts with RAD16.

Its subcellular location is the cytoplasm. It is found in the nucleus. Functionally, as part of the CRL3 E3 ubiquitin ligase complex; polyubiquitylates monoubiquitylated RNA polymerase II subunit RPO21 to trigger its proteolysis; plays a role in global genomic repair. Prevents degradation of interacting proteins like PCL6 by the proteasome. The chain is Elongin-C (ELC1) from Saccharomyces cerevisiae (strain ATCC 204508 / S288c) (Baker's yeast).